The sequence spans 251 residues: Small ribosomal subunit protein uS2 (251 aa).

The protein belongs to the universal ribosomal protein uS2 family.

This chain is Small ribosomal subunit protein uS2, found in Nitrosomonas europaea (strain ATCC 19718 / CIP 103999 / KCTC 2705 / NBRC 14298).